The sequence spans 605 residues: Pyruvate decarboxylase 1 (605 aa).

The substrate site is built by D67 and H154. The interval 432–514 is thiamine pyrophosphate binding; sequence DSWFNCQKLR…FLINNGGYTI (83 aa). 3 residues coordinate Mg(2+): D482, N509, and G511. E515 serves as a coordination point for substrate.

This sequence belongs to the TPP enzyme family. As to quaternary structure, homotetramer. It depends on a metal cation as a cofactor. The cofactor is thiamine diphosphate.

The catalysed reaction is a 2-oxocarboxylate + H(+) = an aldehyde + CO2. The protein is Pyruvate decarboxylase 1 (PDC1) of Oryza sativa subsp. indica (Rice).